Here is a 134-residue protein sequence, read N- to C-terminus: Holo-[acyl-carrier-protein] synthase (134 aa).

Residues Asp-8 and Glu-57 each contribute to the Mg(2+) site.

The protein belongs to the P-Pant transferase superfamily. AcpS family. Mg(2+) serves as cofactor.

The protein resides in the cytoplasm. It carries out the reaction apo-[ACP] + CoA = holo-[ACP] + adenosine 3',5'-bisphosphate + H(+). Functionally, transfers the 4'-phosphopantetheine moiety from coenzyme A to a Ser of acyl-carrier-protein. The sequence is that of Holo-[acyl-carrier-protein] synthase from Rhizobium leguminosarum bv. trifolii (strain WSM2304).